We begin with the raw amino-acid sequence, 431 residues long: uncharacterized protein (431 aa).

The 258-residue stretch at 1 to 258 (MPSQMREAIT…HGLIDLERAG (258 aa)) folds into the Peptidase S8 domain.

This sequence belongs to the peptidase S8 family.

This is an uncharacterized protein from Sinorhizobium fredii (strain NBRC 101917 / NGR234).